A 339-amino-acid chain; its full sequence is Phosphoribosylformylglycinamidine cyclo-ligase (339 aa).

The protein belongs to the AIR synthase family.

It localises to the cytoplasm. The enzyme catalyses 2-formamido-N(1)-(5-O-phospho-beta-D-ribosyl)acetamidine + ATP = 5-amino-1-(5-phospho-beta-D-ribosyl)imidazole + ADP + phosphate + H(+). Its pathway is purine metabolism; IMP biosynthesis via de novo pathway; 5-amino-1-(5-phospho-D-ribosyl)imidazole from N(2)-formyl-N(1)-(5-phospho-D-ribosyl)glycinamide: step 2/2. This is Phosphoribosylformylglycinamidine cyclo-ligase from Streptococcus thermophilus (strain ATCC BAA-250 / LMG 18311).